A 300-amino-acid chain; its full sequence is Geranylgeranyl pyrophosphate synthase (300 aa).

Met-1 bears the N-acetylmethionine mark. Residues Lys-25, Arg-28, and His-57 each contribute to the isopentenyl diphosphate site. Mg(2+) is bound by residues Asp-64 and Asp-68. Dimethylallyl diphosphate is bound at residue Arg-73. Arg-74 is a binding site for isopentenyl diphosphate. Dimethylallyl diphosphate-binding residues include Lys-151, Thr-152, Gln-185, Lys-202, and Lys-212.

It belongs to the FPP/GGPP synthase family. Homohexamer; trimer of homodimers. Mg(2+) is required as a cofactor.

The protein resides in the cytoplasm. It localises to the perinuclear region. It is found in the myofibril. The protein localises to the sarcomere. Its subcellular location is the z line. It carries out the reaction isopentenyl diphosphate + dimethylallyl diphosphate = (2E)-geranyl diphosphate + diphosphate. The catalysed reaction is isopentenyl diphosphate + (2E)-geranyl diphosphate = (2E,6E)-farnesyl diphosphate + diphosphate. The enzyme catalyses isopentenyl diphosphate + (2E,6E)-farnesyl diphosphate = (2E,6E,10E)-geranylgeranyl diphosphate + diphosphate. It participates in isoprenoid biosynthesis; farnesyl diphosphate biosynthesis; farnesyl diphosphate from geranyl diphosphate and isopentenyl diphosphate: step 1/1. The protein operates within isoprenoid biosynthesis; geranyl diphosphate biosynthesis; geranyl diphosphate from dimethylallyl diphosphate and isopentenyl diphosphate: step 1/1. Its pathway is isoprenoid biosynthesis; geranylgeranyl diphosphate biosynthesis; geranylgeranyl diphosphate from farnesyl diphosphate and isopentenyl diphosphate: step 1/1. Catalyzes the trans-addition of the three molecules of IPP onto DMAPP to form geranylgeranyl pyrophosphate, an important precursor of carotenoids and geranylated proteins. The protein is Geranylgeranyl pyrophosphate synthase (GGPS1) of Bos taurus (Bovine).